Consider the following 525-residue polypeptide: GMP synthase [glutamine-hydrolyzing] (525 aa).

Residues 13 to 202 (TILVLDFGSQ…AVDLCHAKQN (190 aa)) enclose the Glutamine amidotransferase type-1 domain. The active-site Nucleophile is Cys89. Residues His176 and Glu178 contribute to the active site. Positions 203–400 (WTMKNFIGTE…LGISHELVWR (198 aa)) constitute a GMPS ATP-PPase domain. 231-237 (SGGVDST) is an ATP binding site. Residues Arg304, Asp462, Lys517, and Glu523 each contribute to the XMP site.

In terms of assembly, homodimer. The cofactor is Mg(2+).

The protein localises to the cytoplasm. It is found in the cytosol. It carries out the reaction XMP + L-glutamine + ATP + H2O = GMP + L-glutamate + AMP + diphosphate + 2 H(+). The protein operates within purine metabolism; GMP biosynthesis; GMP from XMP (L-Gln route): step 1/1. Catalyzes the conversion of xanthine monophosphate (XMP) to GMP in the presence of glutamine and ATP through an adenyl-XMP intermediate. This is GMP synthase [glutamine-hydrolyzing] (GUA1) from Candida glabrata (strain ATCC 2001 / BCRC 20586 / JCM 3761 / NBRC 0622 / NRRL Y-65 / CBS 138) (Yeast).